A 1077-amino-acid polypeptide reads, in one-letter code: ATP-dependent DNA helicase MPH1 (1077 aa).

Residues I99–K266 enclose the Helicase ATP-binding domain. Residue I112–T119 coordinates ATP. The short motif at D214–H217 is the DEAH box element. The region spanning K511–I660 is the Helicase C-terminal domain. 2 disordered regions span residues E536–M556 and T831–Q859. The span at T831–D841 shows a compositional bias: polar residues.

Belongs to the DEAD box helicase family. DEAH subfamily. FANCM sub-subfamily. In terms of assembly, interacts with the MHF histone-fold complex to form the FANCM-MHF complex.

It localises to the nucleus. The enzyme catalyses ATP + H2O = ADP + phosphate + H(+). Functionally, ATP-dependent DNA helicase involved in DNA damage repair by homologous recombination and in genome maintenance. Capable of unwinding D-loops. Plays a role in limiting crossover recombinants during mitotic DNA double-strand break (DSB) repair. Component of a FANCM-MHF complex which promotes gene conversion at blocked replication forks, probably by reversal of the stalled fork. The sequence is that of ATP-dependent DNA helicase MPH1 from Eremothecium gossypii (strain ATCC 10895 / CBS 109.51 / FGSC 9923 / NRRL Y-1056) (Yeast).